The sequence spans 456 residues: Serine--tRNA ligase (456 aa).

252-254 provides a ligand contact to L-serine; that stretch reads TSE. ATP-binding positions include 283–285 and V299; that span reads RKE. E306 lines the L-serine pocket. 370 to 373 is an ATP binding site; the sequence is ELVS. T404 lines the L-serine pocket.

This sequence belongs to the class-II aminoacyl-tRNA synthetase family. Type-1 seryl-tRNA synthetase subfamily. In terms of assembly, homodimer. The tRNA molecule binds across the dimer.

Its subcellular location is the cytoplasm. The catalysed reaction is tRNA(Ser) + L-serine + ATP = L-seryl-tRNA(Ser) + AMP + diphosphate + H(+). It catalyses the reaction tRNA(Sec) + L-serine + ATP = L-seryl-tRNA(Sec) + AMP + diphosphate + H(+). The protein operates within aminoacyl-tRNA biosynthesis; selenocysteinyl-tRNA(Sec) biosynthesis; L-seryl-tRNA(Sec) from L-serine and tRNA(Sec): step 1/1. Functionally, catalyzes the attachment of serine to tRNA(Ser). Is also able to aminoacylate tRNA(Sec) with serine, to form the misacylated tRNA L-seryl-tRNA(Sec), which will be further converted into selenocysteinyl-tRNA(Sec). In Korarchaeum cryptofilum (strain OPF8), this protein is Serine--tRNA ligase.